The following is a 207-amino-acid chain: Frataxin, mitochondrial (207 aa).

The N-terminal 40 residues, 1 to 40 (MWAFGGRAAVGLLPRTASRASAWVGNPRWREPIVTCGRRG), are a transit peptide targeting the mitochondrion.

The protein belongs to the frataxin family. In terms of assembly, component of the mitochondrial core iron-sulfur cluster (ISC) complex composed of NFS1, LYRM4, NDUFAB1, ISCU, FXN, and FDX2; this complex is a heterohexamer containing two copies of each monomer. Homodimer. Monomer (probable predominant form). Oligomer. Monomers and polymeric aggregates of &gt;1 MDa have been isolated from mitochondria. A small fraction of heterologous overexpressed recombinant frataxin forms high-molecular weight aggregates that incorporate iron. Interacts with LYRM4. Interacts (via ferrous form) with ISCU; the interaction is possible when both are bound to the dimeric form of the cysteine desulfurase complex (NFS1:LYRM4) and the interaction enhances FXN interaction to the dimeric form of the cysteine desulfurase complex (NFS1:LYRM4). Interacts with FECH; one iron-bound FXN monomer seems to interact with a FECH homodimer. Interacts with SDHA and SDHB. Interacts with ACO2; the interaction is dependent on citrate. Interacts with HSPA9. Component of a complex composed of FXN, NFS1, LYRM4 and ISCU. As to quaternary structure, interacts with ACO1. Interacts with ISCU (cytoplasmic form). In terms of processing, processed in two steps by mitochondrial processing peptidase (MPP). MPP first cleaves the precursor to intermediate form and subsequently converts the intermediate to yield frataxin mature form (frataxin(81-210)) which is the predominant form. The additional forms, frataxin(56-210) and frataxin(78-210), seem to be produced when the normal maturation process is impaired; their physiological relevance is unsure. Heart, liver, skeletal muscle, kidney, spleen and thymus. Weakly expressed in the brain and lung.

The protein resides in the mitochondrion. It localises to the cytoplasm. The protein localises to the cytosol. The enzyme catalyses 4 Fe(2+) + O2 + 4 H(+) = 4 Fe(3+) + 2 H2O. Functionally, functions as an activator of persulfide transfer to the scaffoding protein ISCU as component of the core iron-sulfur cluster (ISC) assembly complex and participates to the [2Fe-2S] cluster assembly. Accelerates sulfur transfer from NFS1 persulfide intermediate to ISCU and to small thiols such as L-cysteine and glutathione leading to persulfuration of these thiols and ultimately sulfide release. Binds ferrous ion and is released from FXN upon the addition of both L-cysteine and reduced FDX2 during [2Fe-2S] cluster assembly. The core iron-sulfur cluster (ISC) assembly complex is involved in the de novo synthesis of a [2Fe-2S] cluster, the first step of the mitochondrial iron-sulfur protein biogenesis. This process is initiated by the cysteine desulfurase complex (NFS1:LYRM4:NDUFAB1) that produces persulfide which is delivered on the scaffold protein ISCU in a FXN-dependent manner. Then this complex is stabilized by FDX2 which provides reducing equivalents to accomplish the [2Fe-2S] cluster assembly. Finally, the [2Fe-2S] cluster is transferred from ISCU to chaperone proteins, including HSCB, HSPA9 and GLRX5. May play a role in the protection against iron-catalyzed oxidative stress through its ability to catalyze the oxidation of Fe(2+) to Fe(3+); the oligomeric form but not the monomeric form has in vitro ferroxidase activity. May be able to store large amounts of iron in the form of a ferrihydrite mineral by oligomerization; however, the physiological relevance is unsure as reports are conflicting and the function has only been shown using heterologous overexpression systems. May function as an iron chaperone protein that protects the aconitase [4Fe-4S]2+ cluster from disassembly and promotes enzyme reactivation. May play a role as a high affinity iron binding partner for FECH that is capable of both delivering iron to ferrochelatase and mediating the terminal step in mitochondrial heme biosynthesis. Its function is as follows. Modulates the RNA-binding activity of ACO1. May be involved in the cytoplasmic iron-sulfur protein biogenesis. May contribute to oxidative stress resistance and overall cell survival. The chain is Frataxin, mitochondrial from Mus musculus (Mouse).